We begin with the raw amino-acid sequence, 92 residues long: Elongation factor 1-beta (92 aa).

The protein belongs to the EF-1-beta/EF-1-delta family.

Promotes the exchange of GDP for GTP in EF-1-alpha/GDP, thus allowing the regeneration of EF-1-alpha/GTP that could then be used to form the ternary complex EF-1-alpha/GTP/AAtRNA. The chain is Elongation factor 1-beta (ef1b) from Pyrobaculum aerophilum (strain ATCC 51768 / DSM 7523 / JCM 9630 / CIP 104966 / NBRC 100827 / IM2).